A 180-amino-acid polypeptide reads, in one-letter code: Large ribosomal subunit protein uL6 (180 aa).

It belongs to the universal ribosomal protein uL6 family. As to quaternary structure, part of the 50S ribosomal subunit.

In terms of biological role, this protein binds to the 23S rRNA, and is important in its secondary structure. It is located near the subunit interface in the base of the L7/L12 stalk, and near the tRNA binding site of the peptidyltransferase center. This is Large ribosomal subunit protein uL6 from Prosthecochloris aestuarii (strain DSM 271 / SK 413).